Here is a 528-residue protein sequence, read N- to C-terminus: Glutamyl-tRNA(Gln) amidotransferase subunit B, mitochondrial (528 aa).

A mitochondrion-targeting transit peptide spans 1–21; the sequence is MSWRLSFRTNLLIYNVRRRNY.

It belongs to the GatB/GatE family. GatB subfamily. As to quaternary structure, subunit of the heterotrimeric GatCAB amidotransferase (AdT) complex, composed of A, B and C subunits.

The protein localises to the mitochondrion. It catalyses the reaction L-glutamyl-tRNA(Gln) + L-glutamine + ATP + H2O = L-glutaminyl-tRNA(Gln) + L-glutamate + ADP + phosphate + H(+). Its function is as follows. Allows the formation of correctly charged Gln-tRNA(Gln) through the transamidation of misacylated Glu-tRNA(Gln) in the mitochondria. The reaction takes place in the presence of glutamine and ATP through an activated gamma-phospho-Glu-tRNA(Gln). The chain is Glutamyl-tRNA(Gln) amidotransferase subunit B, mitochondrial from Aedes aegypti (Yellowfever mosquito).